Reading from the N-terminus, the 308-residue chain is MSAQKPGLHPRNRHHSRYDLATLCQVNPELRQFLTLTPAGEQSVDFANPLAVKALNKALLAHFYAVANWDIPDGFLCPPVPGRADYIHHLADLLAEASGTIPANASILDIGVGANCIYPLIGVHEYGWRFTGSETSSQALSSAQAIISANPGLNRAIRLRRQKESGAIFNGIIHKNEQYDATLCNPPFHNSATAARAGSERKRRNLGLNKDDALNFGGQQQELWCEGGEVAFIKKMIEESKGFAKQVMWFTSLVSRGENLPPLYRALTDVGAVKVVKKEMAQGQKQSRFIAWTFMNDEQRRRFVNRQR.

The protein belongs to the methyltransferase superfamily. METTL16/RlmF family.

The protein localises to the cytoplasm. It catalyses the reaction adenosine(1618) in 23S rRNA + S-adenosyl-L-methionine = N(6)-methyladenosine(1618) in 23S rRNA + S-adenosyl-L-homocysteine + H(+). Functionally, specifically methylates the adenine in position 1618 of 23S rRNA. The polypeptide is Ribosomal RNA large subunit methyltransferase F (Escherichia coli O6:H1 (strain CFT073 / ATCC 700928 / UPEC)).